Consider the following 379-residue polypeptide: Dual-specificity RNA methyltransferase RlmN (379 aa).

E95 functions as the Proton acceptor in the catalytic mechanism. Residues 101–345 (EETRGTLCVS…TTVRKTRGDD (245 aa)) enclose the Radical SAM core domain. C108 and C350 are oxidised to a cystine. [4Fe-4S] cluster is bound by residues C115, C119, and C122. Residues 176 to 177 (GE), S208, 230 to 232 (SLH), and N307 each bind S-adenosyl-L-methionine. Catalysis depends on C350, which acts as the S-methylcysteine intermediate.

This sequence belongs to the radical SAM superfamily. RlmN family. Requires [4Fe-4S] cluster as cofactor.

It is found in the cytoplasm. It carries out the reaction adenosine(2503) in 23S rRNA + 2 reduced [2Fe-2S]-[ferredoxin] + 2 S-adenosyl-L-methionine = 2-methyladenosine(2503) in 23S rRNA + 5'-deoxyadenosine + L-methionine + 2 oxidized [2Fe-2S]-[ferredoxin] + S-adenosyl-L-homocysteine. The catalysed reaction is adenosine(37) in tRNA + 2 reduced [2Fe-2S]-[ferredoxin] + 2 S-adenosyl-L-methionine = 2-methyladenosine(37) in tRNA + 5'-deoxyadenosine + L-methionine + 2 oxidized [2Fe-2S]-[ferredoxin] + S-adenosyl-L-homocysteine. In terms of biological role, specifically methylates position 2 of adenine 2503 in 23S rRNA and position 2 of adenine 37 in tRNAs. m2A2503 modification seems to play a crucial role in the proofreading step occurring at the peptidyl transferase center and thus would serve to optimize ribosomal fidelity. This chain is Dual-specificity RNA methyltransferase RlmN, found in Burkholderia cenocepacia (strain ATCC BAA-245 / DSM 16553 / LMG 16656 / NCTC 13227 / J2315 / CF5610) (Burkholderia cepacia (strain J2315)).